The chain runs to 203 residues: MAVIKGITPEQVAQICIGHYAGVDEVGRGPLIGNVVTAAVILDPNNPIEGLNDSKKLSEKKRELLFEQIQQKALSVSVGSATPAEIDELNILHATMLAMQRAVAGLNIKPTSVLVDGNRTPDFGVESHAIIKGDGLIDAISAASIIAKVVRDREMDALALQYPEYGFDKHKGYPTKAHFEALTQHGVLPEHRKSFRPVREALA.

An RNase H type-2 domain is found at 18–203 (GHYAGVDEVG…SFRPVREALA (186 aa)). A divalent metal cation contacts are provided by aspartate 24, glutamate 25, and aspartate 116.

The protein belongs to the RNase HII family. The cofactor is Mn(2+). Mg(2+) serves as cofactor.

The protein resides in the cytoplasm. The catalysed reaction is Endonucleolytic cleavage to 5'-phosphomonoester.. Functionally, endonuclease that specifically degrades the RNA of RNA-DNA hybrids. This is Ribonuclease HII from Shewanella halifaxensis (strain HAW-EB4).